The primary structure comprises 435 residues: Ribosomal protein uS12 methylthiotransferase RimO (435 aa).

The 111-residue stretch at 3-113 folds into the MTTase N-terminal domain; that stretch reads HKVGFVSLGC…VVNAVHQYLP (111 aa). The [4Fe-4S] cluster site is built by Cys-12, Cys-48, Cys-77, Cys-144, Cys-148, and Cys-151. The Radical SAM core domain maps to 130–367; it reads LTPRHYAYLK…MQVQAEISRN (238 aa). Positions 370–435 constitute a TRAM domain; sequence KNKIGSTQTV…DDYDLYASLV (66 aa).

Belongs to the methylthiotransferase family. RimO subfamily. [4Fe-4S] cluster serves as cofactor.

Its subcellular location is the cytoplasm. It catalyses the reaction L-aspartate(89)-[ribosomal protein uS12]-hydrogen + (sulfur carrier)-SH + AH2 + 2 S-adenosyl-L-methionine = 3-methylsulfanyl-L-aspartate(89)-[ribosomal protein uS12]-hydrogen + (sulfur carrier)-H + 5'-deoxyadenosine + L-methionine + A + S-adenosyl-L-homocysteine + 2 H(+). Catalyzes the methylthiolation of an aspartic acid residue of ribosomal protein uS12. The chain is Ribosomal protein uS12 methylthiotransferase RimO from Legionella pneumophila subsp. pneumophila (strain Philadelphia 1 / ATCC 33152 / DSM 7513).